Reading from the N-terminus, the 317-residue chain is MGGVIKSIFTFVLIVEFIIGNLGNSFIALVNCIDWVKGRKISSVDRILTALAISRISLVWLIFGSWCVSVFFPALFATEKMFRMLTNIWTVINHFSVWLATGLGTFYFLKIANFSNSIFLYLKWRVKKVVLVLLLVTSVFLFLNIALINIHINASINGYRRNKTCSSDSSNFTRFSSLIVLTSTVFIFIPFTLSLAMFLLLIFSMWKHRKKMQHTVKISGDASTKAHRGVKSVITFFLLYAIFSLSFFISVWTSERLEENLIILSQVMGMAYPSCHSCVLILGNKKLRQASLSVLLWLRYMFKDGEPSGHKEFRESS.

The Extracellular portion of the chain corresponds to 1–7 (MGGVIKS). The chain crosses the membrane as a helical span at residues 8–28 (IFTFVLIVEFIIGNLGNSFIA). The Cytoplasmic portion of the chain corresponds to 29–55 (LVNCIDWVKGRKISSVDRILTALAISR). The helical transmembrane segment at 56–76 (ISLVWLIFGSWCVSVFFPALF) threads the bilayer. The Extracellular segment spans residues 77-87 (ATEKMFRMLTN). Positions 86 and 89 each coordinate cholesterol. Residues 88-108 (IWTVINHFSVWLATGLGTFYF) form a helical membrane-spanning segment. Residues 109-129 (LKIANFSNSIFLYLKWRVKKV) lie on the Cytoplasmic side of the membrane. Residues 130 to 150 (VLVLLLVTSVFLFLNIALINI) form a helical membrane-spanning segment. At 151–184 (HINASINGYRRNKTCSSDSSNFTRFSSLIVLTST) the chain is on the extracellular side. N-linked (GlcNAc...) asparagine glycosylation is found at asparagine 153, asparagine 162, and asparagine 171. Cholesterol is bound at residue valine 180. The helical transmembrane segment at 185–205 (VFIFIPFTLSLAMFLLLIFSM) threads the bilayer. Topologically, residues 206–232 (WKHRKKMQHTVKISGDASTKAHRGVKS) are cytoplasmic. Residues 233–253 (VITFFLLYAIFSLSFFISVWT) form a helical membrane-spanning segment. The Extracellular portion of the chain corresponds to 254–261 (SERLEENL). Residues 262-282 (IILSQVMGMAYPSCHSCVLIL) traverse the membrane as a helical segment. Residues serine 265 and methionine 268 each coordinate cholesterol. Residues 283–317 (GNKKLRQASLSVLLWLRYMFKDGEPSGHKEFRESS) are Cytoplasmic-facing.

This sequence belongs to the G-protein coupled receptor T2R family. In terms of assembly, core component of the TAS2R14-GNAI1 complex, consisting of TAS2R14, GNAI1, GNB1 and GNG2; within the complex interacts with GNAI1. Core component of the TAS2R14-GNAT3 complex, consisting of TAS2R14, GNAT3, GNB1 and GNG2; within the complex interacts with GNAT3. Core component of the TAS2R14-GNAS2 complex, consisting of TAS2R14, GNAS2, GNB1 and GNG2; within the complex interacts with GNAS2. In terms of tissue distribution, highly expressed in cerebellum, pancreas, small intestine and thymus; also expressed in adipose, aorta, skin and tongue, but at significantly lower levels. Expressed in subsets of taste receptor cells of the tongue and palate epithelium and exclusively in gustducin-positive cells. Expressed in testis.

It is found in the membrane. The catalysed reaction is Ca(2+)(in) = Ca(2+)(out). It catalyses the reaction 3',5'-cyclic AMP(in) = 3',5'-cyclic AMP(out). Its activity is regulated as follows. Basal activity is enhanced by binding to bitter tastants, such as flufenamic acid and aristolochic acid. Regulated by cholesterol in a concentration-dependent manner. Functionally, gustducin-linked G-protein coupled receptor that plays a role in the perception of bitterness. The activity of this receptor stimulates GNAT3, activating the gustducin G-protein pathway. Likely plays a role in sensing the chemical composition of the gastrointestinal content and other extra-oral tissues via the inhibitory G-protein pathways. The sequence is that of Taste receptor type 2 member 14 (TAS2R14) from Homo sapiens (Human).